The primary structure comprises 190 residues: Large ribosomal subunit protein bL9 (190 aa).

Belongs to the bacterial ribosomal protein bL9 family.

In terms of biological role, binds to the 23S rRNA. This Methylorubrum extorquens (strain CM4 / NCIMB 13688) (Methylobacterium extorquens) protein is Large ribosomal subunit protein bL9.